The chain runs to 187 residues: Putative adenylate kinase (187 aa).

Residues Gly-10, Gly-12, Lys-13, Thr-14, and Ile-15 each coordinate ATP. The tract at residues 30 to 53 (SLSQFVIENKLYTEYDELRQSYII) is NMP. An LID region spans residues 103–113 (GRGWADIKVAE). ATP is bound at residue Arg-104.

It belongs to the adenylate kinase family. AK6 subfamily. Interacts with uS11. Not a structural component of 40S pre-ribosomes, but transiently interacts with them by binding to uS11.

The enzyme catalyses AMP + ATP = 2 ADP. It catalyses the reaction ATP + H2O = ADP + phosphate + H(+). Functionally, broad-specificity nucleoside monophosphate (NMP) kinase that catalyzes the reversible transfer of the terminal phosphate group between nucleoside triphosphates and monophosphates. Also has ATPase activity. Involved in the late maturation steps of the 30S ribosomal particles, specifically 16S rRNA maturation. While NMP activity is not required for ribosome maturation, ATPase activity is. Associates transiently with small ribosomal subunit protein uS11. ATP hydrolysis breaks the interaction with uS11. May temporarily remove uS11 from the ribosome to enable a conformational change of the ribosomal RNA that is needed for the final maturation step of the small ribosomal subunit. The chain is Putative adenylate kinase from Saccharolobus islandicus (strain L.S.2.15 / Lassen #1) (Sulfolobus islandicus).